The sequence spans 805 residues: Ubiquitin carboxyl-terminal hydrolase 10 (805 aa).

The tract at residues 139–170 is disordered; that stretch reads DGSGNADSDGTSGTGQRERKKKKKRPPGYYSY. The segment covering 143–153 has biased composition (polar residues); it reads NADSDGTSGTG. Residues 422–802 enclose the USP domain; the sequence is RGLINKGNWC…TAYLLYYRRV (381 aa). Cysteine 431 (nucleophile) is an active-site residue. Residues 561–593 form a disordered region; it reads HINNGPDPVSEKEEINKDEQEGSDEEWEQVGPR. Residues 569–580 are compositionally biased toward basic and acidic residues; the sequence is VSEKEEINKDEQ. Histidine 756 serves as the catalytic Proton acceptor.

It belongs to the peptidase C19 family. USP10 subfamily.

Its subcellular location is the cytoplasm. It localises to the nucleus. The catalysed reaction is Thiol-dependent hydrolysis of ester, thioester, amide, peptide and isopeptide bonds formed by the C-terminal Gly of ubiquitin (a 76-residue protein attached to proteins as an intracellular targeting signal).. Its function is as follows. Hydrolase that can remove conjugated ubiquitin from target proteins such as p53/tp53, rps2/us5, rps3/us3, rps10/eS10, becn1, snx3 and cftr. Acts as an essential regulator of p53/tp53 stability: in unstressed cells, specifically deubiquitinates p53/tp53 in the cytoplasm, leading to counteracts MDM2 action and stabilize p53/tp53. Following DNA damage, translocates to the nucleus and deubiquitinates p53/tp53, leading to regulate the p53/TP53-dependent DNA damage response. Component of a regulatory loop that controls autophagy and p53/tp53 levels. Plays a key role in 40S ribosome subunit recycling when a ribosome has stalled during translation: acts both by inhibiting formation of stress granules, which store stalled translation pre-initiation complexes, and mediating deubiquitination of 40S ribosome subunits. Deubiquitinates cftr in early endosomes, enhancing its endocytic recycling. This is Ubiquitin carboxyl-terminal hydrolase 10 (usp10) from Xenopus tropicalis (Western clawed frog).